Reading from the N-terminus, the 620-residue chain is Proline--tRNA ligase (620 aa).

Belongs to the class-II aminoacyl-tRNA synthetase family. ProS type 1 subfamily. As to quaternary structure, homodimer.

It is found in the cytoplasm. It carries out the reaction tRNA(Pro) + L-proline + ATP = L-prolyl-tRNA(Pro) + AMP + diphosphate. Catalyzes the attachment of proline to tRNA(Pro) in a two-step reaction: proline is first activated by ATP to form Pro-AMP and then transferred to the acceptor end of tRNA(Pro). As ProRS can inadvertently accommodate and process non-cognate amino acids such as alanine and cysteine, to avoid such errors it has two additional distinct editing activities against alanine. One activity is designated as 'pretransfer' editing and involves the tRNA(Pro)-independent hydrolysis of activated Ala-AMP. The other activity is designated 'posttransfer' editing and involves deacylation of mischarged Ala-tRNA(Pro). The misacylated Cys-tRNA(Pro) is not edited by ProRS. The polypeptide is Proline--tRNA ligase (Streptococcus suis (strain 98HAH33)).